The chain runs to 507 residues: Dolichyl pyrophosphate Man9GlcNAc2 alpha-1,3-glucosyltransferase (507 aa).

Over 1-2 (ME) the chain is Cytoplasmic. The chain crosses the membrane as a helical span at residues 3–23 (SWTWMTVVVLLGLTVRWTVSL). Residues 24–114 (NSYSGAGKPP…SQAHKLFMRT (91 aa)) lie on the Lumenal side of the membrane. N-linked (GlcNAc...) asparagine glycosylation occurs at Asn59. Residues 115-135 (TVLAADLLIYIPAVLLYCYSL) form a helical membrane-spanning segment. Residues 136–143 (KEISPKRK) are Cytoplasmic-facing. The chain crosses the membrane as a helical span at residues 144–164 (IASALCILLYPGLILIDYGHF). The Lumenal portion of the chain corresponds to 165-172 (QYNSVSLG). A helical transmembrane segment spans residues 173–193 (FALWGVLGVSCDWDLLGSLAF). At 194-229 (CLALNYKQMELYHSLPFFCFLLGKCFKKGLRGKGSA) the chain is on the cytoplasmic side. The helical transmembrane segment at 230–250 (LFIRIACTVVASFLLCWLPFL) threads the bilayer. Topologically, residues 251–297 (TEREHALQVVRRLFPVDRGLFEDKVANIWCSLNVFLKIKDILPRHIQ) are lumenal. Residues 298–318 (IAISFCFTFLSLLPACIKLTV) form a helical membrane-spanning segment. Topologically, residues 319–332 (QPSAKGFRFTLVSC) are cytoplasmic. Residues 333–353 (ALSFFLFSFQVHEKSILLVSL) traverse the membrane as a helical segment. Topologically, residues 354 to 361 (PVCLVLTE) are lumenal. The chain crosses the membrane as a helical span at residues 362–382 (IPFMSTWFLLVSTFSMLPLLL). Topologically, residues 383–385 (KDQ) are cytoplasmic. Residues 386-406 (LLLPSVVTVMAFLIACSTFFP) form a helical membrane-spanning segment. Residues 407–437 (MFENTSEEQLQLKSFAVSVRRHLPGFTFLPR) are Lumenal-facing. A helical transmembrane segment spans residues 438 to 458 (IIQCLFLSSVITMILLTILSV). At 459 to 468 (TLDPPQKLPD) the chain is on the cytoplasmic side. A helical transmembrane segment spans residues 469–489 (LFSVLICFVSCVNFVFFLVYF). The Lumenal segment spans residues 490–507 (NIVIMWDSKNGRNRKKID).

Belongs to the ALG6/ALG8 glucosyltransferase family.

It localises to the endoplasmic reticulum membrane. It carries out the reaction an alpha-D-Man-(1-&gt;2)-alpha-D-Man-(1-&gt;2)-alpha-D-Man-(1-&gt;3)-[alpha-D-Man-(1-&gt;2)-alpha-D-Man-(1-&gt;3)-[alpha-D-Man-(1-&gt;2)-alpha-D-Man-(1-&gt;6)]-alpha-D-Man-(1-&gt;6)]-beta-D-Man-(1-&gt;4)-beta-D-GlcNAc-(1-&gt;4)-alpha-D-GlcNAc-diphospho-di-trans,poly-cis-dolichol + a di-trans,poly-cis-dolichyl beta-D-glucosyl phosphate = an alpha-D-Glc-(1-&gt;3)-alpha-D-Man-(1-&gt;2)-alpha-D-Man-(1-&gt;2)-alpha-D-Man-(1-&gt;3)-[alpha-D-Man-(1-&gt;2)-alpha-D-Man-(1-&gt;3)-[alpha-D-Man-(1-&gt;2)-alpha-D-Man-(1-&gt;6)]-alpha-D-Man-(1-&gt;6)]-beta-D-Man-(1-&gt;4)-beta-D-GlcNAc-(1-&gt;4)-alpha-D-GlcNAc-diphospho-di-trans,poly-cis-dolichol + a di-trans,poly-cis-dolichyl phosphate + H(+). It functions in the pathway protein modification; protein glycosylation. In terms of biological role, dolichyl pyrophosphate Man9GlcNAc2 alpha-1,3-glucosyltransferase that operates in the biosynthetic pathway of dolichol-linked oligosaccharides, the glycan precursors employed in protein asparagine (N)-glycosylation. The assembly of dolichol-linked oligosaccharides begins on the cytosolic side of the endoplasmic reticulum membrane and finishes in its lumen. The sequential addition of sugars to dolichol pyrophosphate produces dolichol-linked oligosaccharides containing fourteen sugars, including two GlcNAcs, nine mannoses and three glucoses. Once assembled, the oligosaccharide is transferred from the lipid to nascent proteins by oligosaccharyltransferases. In the lumen of the endoplasmic reticulum, adds the first glucose residue from dolichyl phosphate glucose (Dol-P-Glc) onto the lipid-linked oligosaccharide intermediate Man(9)GlcNAc(2)-PP-Dol to produce Glc(1)Man(9)GlcNAc(2)-PP-Dol. Glc(1)Man(9)GlcNAc(2)-PP-Dol is a substrate for ALG8, the following enzyme in the biosynthetic pathway. This Rattus norvegicus (Rat) protein is Dolichyl pyrophosphate Man9GlcNAc2 alpha-1,3-glucosyltransferase.